Reading from the N-terminus, the 136-residue chain is DNA-binding protein H-NS (136 aa).

Positions 13 to 67 (TLRAQARECTLETLEEMLEKLEVVVNERREEDSQAQAEIEERTRKLQQYREMLIA) form a coiled coil. Residues 113–118 (QGRTPA) mediate DNA binding.

This sequence belongs to the histone-like protein H-NS family. Interacts with YmoA in the absence of DNA. Homodimer that oligomerizes on DNA into higher-order complexes that form bridges between disparate regions of DNA compacting it. Interacts with YmoA.

The protein resides in the cytoplasm. It localises to the nucleoid. In terms of biological role, a DNA-binding protein implicated in transcriptional repression and chromosome organization and compaction. Binds nucleation sites in AT-rich DNA and bridges them, forming higher-order nucleoprotein complexes and condensing the chromosome. As many horizontally transferred genes are AT-rich, it plays a central role in silencing foreign genes. A subset of genes are repressed by H-NS in association with YmoA. Complements a number of hns deficiencies in E.coli; represses the bgl operon, represses hemolysin expression. In Yersinia enterocolitica, this protein is DNA-binding protein H-NS.